A 494-amino-acid chain; its full sequence is Glutamyl-tRNA(Gln) amidotransferase subunit A (494 aa).

Residues K80 and S155 each act as charge relay system in the active site. S179 (acyl-ester intermediate) is an active-site residue.

The protein belongs to the amidase family. GatA subfamily. Heterotrimer of A, B and C subunits.

It carries out the reaction L-glutamyl-tRNA(Gln) + L-glutamine + ATP + H2O = L-glutaminyl-tRNA(Gln) + L-glutamate + ADP + phosphate + H(+). In terms of biological role, allows the formation of correctly charged Gln-tRNA(Gln) through the transamidation of misacylated Glu-tRNA(Gln) in organisms which lack glutaminyl-tRNA synthetase. The reaction takes place in the presence of glutamine and ATP through an activated gamma-phospho-Glu-tRNA(Gln). This Lachnoclostridium phytofermentans (strain ATCC 700394 / DSM 18823 / ISDg) (Clostridium phytofermentans) protein is Glutamyl-tRNA(Gln) amidotransferase subunit A.